The primary structure comprises 274 residues: Phosphatidylglycerol--prolipoprotein diacylglyceryl transferase (274 aa).

The next 4 helical transmembrane spans lie at 19–39, 59–79, 93–113, and 120–140; these read VGSVVIRWYGVLIAAAIVLGL, LAIWLVIGAIPCARLYYVLFQ, IWRGGIAIHGAILGGMLAALI, and VSFWQLADLVAPSLILGQAIG. Arginine 141 is a binding site for a 1,2-diacyl-sn-glycero-3-phospho-(1'-sn-glycerol). 3 consecutive transmembrane segments (helical) span residues 181 to 201, 209 to 229, and 243 to 263; these read TFLYESVWNLMVLGILLALFF, GTIFLVYAVTYSLGRLWIEGL, and QVVSLIGIGIGMLGLTWLYLL.

Belongs to the Lgt family.

Its subcellular location is the cell inner membrane. It catalyses the reaction L-cysteinyl-[prolipoprotein] + a 1,2-diacyl-sn-glycero-3-phospho-(1'-sn-glycerol) = an S-1,2-diacyl-sn-glyceryl-L-cysteinyl-[prolipoprotein] + sn-glycerol 1-phosphate + H(+). It functions in the pathway protein modification; lipoprotein biosynthesis (diacylglyceryl transfer). Catalyzes the transfer of the diacylglyceryl group from phosphatidylglycerol to the sulfhydryl group of the N-terminal cysteine of a prolipoprotein, the first step in the formation of mature lipoproteins. The sequence is that of Phosphatidylglycerol--prolipoprotein diacylglyceryl transferase from Acaryochloris marina (strain MBIC 11017).